The following is a 63-amino-acid chain: Eumenitin VP1 (63 aa).

An N-terminal signal peptide occupies residues 1 to 22; the sequence is MRGTSFILFAVVVILGFLHANA. AXPX repeat units follow at residues 22–25, 26–29, 32–35, 40–43, and 44–47; these read AEPL, ANPA, ANPD, ADPL, and ADPE. The propeptide occupies 23–48; the sequence is EPLANPAPLANPDPLANADPLADPEA.

In terms of tissue distribution, expressed by the venom gland.

It is found in the secreted. The protein localises to the target cell membrane. Functionally, antimicrobial peptide with activities against the fungi B.cinerea (MIC=5 uM) and C.albicans (MIC=100 uM), the Gram-negative bacterium E.coli (MIC=25 uM) and the Gram-positive bacterium S.aureus (MIC=100 uM). Shows cytolytic activity against insect cell lines. Has no hemolytic activity against human erythrocytes. In vivo, peptide injection in the vicinity of the head and thorax of lepidopteran larvae induces feeding disorder followed by death due to starvation. This chain is Eumenitin VP1, found in Eumenes pomiformis (Potter wasp).